Consider the following 249-residue polypeptide: Triosephosphate isomerase (249 aa).

Residues asparagine 12 and lysine 14 each contribute to the substrate site. N6-acetyllysine is present on lysine 14. 3'-nitrotyrosine is present on tyrosine 68. Serine 80 carries the phosphoserine modification. Histidine 96 acts as the Electrophile in catalysis. Serine 106 is subject to Phosphoserine. Residue lysine 142 forms a Glycyl lysine isopeptide (Lys-Gly) (interchain with G-Cter in SUMO1) linkage. Lysine 149 is subject to N6-succinyllysine. Residue lysine 156 is modified to N6-acetyllysine; alternate. An N6-succinyllysine; alternate modification is found at lysine 156. Serine 159 carries the phosphoserine modification. The active-site Proton acceptor is the glutamate 166. Phosphothreonine is present on threonine 173. Lysine 194 is subject to N6-acetyllysine; alternate. Lysine 194 is subject to N6-succinyllysine; alternate. Position 194 is an N6-methyllysine; alternate (lysine 194). Phosphoserine is present on serine 198. A 3'-nitrotyrosine modification is found at tyrosine 209. Residue serine 212 is modified to Phosphoserine. Position 214 is a phosphothreonine (threonine 214). The residue at position 223 (serine 223) is a Phosphoserine. Lysine 238 bears the N6-acetyllysine mark.

This sequence belongs to the triosephosphate isomerase family. As to quaternary structure, homodimer.

The protein resides in the cytoplasm. It carries out the reaction dihydroxyacetone phosphate = methylglyoxal + phosphate. The enzyme catalyses D-glyceraldehyde 3-phosphate = dihydroxyacetone phosphate. It participates in carbohydrate degradation; glycolysis; D-glyceraldehyde 3-phosphate from glycerone phosphate: step 1/1. It functions in the pathway carbohydrate biosynthesis; gluconeogenesis. In terms of biological role, triosephosphate isomerase is an extremely efficient metabolic enzyme that catalyzes the interconversion between dihydroxyacetone phosphate (DHAP) and D-glyceraldehyde-3-phosphate (G3P) in glycolysis and gluconeogenesis. It is also responsible for the non-negligible production of methylglyoxal a reactive cytotoxic side-product that modifies and can alter proteins, DNA and lipids. The sequence is that of Triosephosphate isomerase (TPI1) from Pongo abelii (Sumatran orangutan).